Here is a 423-residue protein sequence, read N- to C-terminus: MLRVRCLRGGSRGAEAVHYIGSRLGRTLTGWVQRTFQSTQAATASSRNSFAADDKATEPLPKDCPVSSYNEWDPLEEVIVGRAENARVPPFTIEVKANTYEKYWPFYQKHGGHYFPKDHLKKAVTEIEEMCNILKMEGVTVRRPDPIDWSLKYKTPDFESTGLYSAMPRDILIVVGNEIIEAPMAWRSRFFEYRAYRSIIKDYFHRGAKWTTAPKPTMADELYDRDYPIHSVEDRHKLAAQGKFVTTEFEPCFDAADFIRAGKDIFAQRSQVTNYLGIEWMRRHLAPDYRVHIISFKDPNPMHIDATFNIIGPGTVLSNPDRPCHQIDLFKKAGWTIITPPTPIIPDDHPLWMSSKWLSMNVLMLDEKRVMVDANEVPTQKMFEKLGITTIKVNIRNANSLGGGFHCWTCDVRRRGTLQSYLD.

A mitochondrion-targeting transit peptide spans 1 to 43 (MLRVRCLRGGSRGAEAVHYIGSRLGRTLTGWVQRTFQSTQAAT). Residues 43–63 (TASSRNSFAADDKATEPLPKD) are disordered. Phosphoserine occurs at positions 46 and 49. Over residues 52–61 (ADDKATEPLP) the composition is skewed to basic and acidic residues. Position 170 (aspartate 170) interacts with arginine. Residues aspartate 254 and histidine 303 contribute to the active site. Arginine is bound by residues aspartate 305, arginine 322, serine 354, and serine 355. Residue lysine 385 is modified to N6-acetyllysine. The active-site Amidino-cysteine intermediate is cysteine 407.

The protein belongs to the amidinotransferase family. In terms of assembly, homodimer.

It localises to the mitochondrion inner membrane. It carries out the reaction L-arginine + glycine = guanidinoacetate + L-ornithine. The catalysed reaction is 4-aminobutanoate + L-arginine = 4-guanidinobutanoate + L-ornithine. The enzyme catalyses beta-alanine + L-arginine = 3-guanidinopropanoate + L-ornithine. It catalyses the reaction taurine + L-arginine = taurocyamine + L-ornithine. It functions in the pathway amine and polyamine biosynthesis; creatine biosynthesis; creatine from L-arginine and glycine: step 1/2. Its function is as follows. Transamidinase that catalyzes the transfer of the amidino group of L-arginine onto the amino moiety of acceptor metabolites such as glycine, beta-alanine, gamma-aminobutyric acid (GABA) and taurine yielding the corresponding guanidine derivatives. Catalyzes the rate-limiting step of creatine biosynthesis, namely the transfer of the amidino group from L-arginine to glycine to generate guanidinoacetate, which is then methylated by GAMT to form creatine. Provides creatine as a source for ATP generation in tissues with high energy demands, in particular skeletal muscle, heart and brain. The chain is Glycine amidinotransferase, mitochondrial (GATM) from Macaca fascicularis (Crab-eating macaque).